The chain runs to 349 residues: Anthranilate phosphoribosyltransferase (349 aa).

Residues glycine 82, 85 to 86, threonine 90, 92 to 95, 110 to 118, and glycine 122 each bind 5-phospho-alpha-D-ribose 1-diphosphate; these read GD, NVST, and KHGNRSVSS. Glycine 82 is a binding site for anthranilate. Serine 94 contacts Mg(2+). Asparagine 113 provides a ligand contact to anthranilate. Arginine 168 lines the anthranilate pocket. 2 residues coordinate Mg(2+): aspartate 232 and glutamate 233.

It belongs to the anthranilate phosphoribosyltransferase family. Homodimer. Mg(2+) serves as cofactor.

The catalysed reaction is N-(5-phospho-beta-D-ribosyl)anthranilate + diphosphate = 5-phospho-alpha-D-ribose 1-diphosphate + anthranilate. The protein operates within amino-acid biosynthesis; L-tryptophan biosynthesis; L-tryptophan from chorismate: step 2/5. In terms of biological role, catalyzes the transfer of the phosphoribosyl group of 5-phosphorylribose-1-pyrophosphate (PRPP) to anthranilate to yield N-(5'-phosphoribosyl)-anthranilate (PRA). This Methanosphaera stadtmanae (strain ATCC 43021 / DSM 3091 / JCM 11832 / MCB-3) protein is Anthranilate phosphoribosyltransferase.